The primary structure comprises 545 residues: CTP synthase (545 aa).

The interval 2 to 266 is amidoligase domain; that stretch reads TTNYIFVTGG…DDYICKRFSL (265 aa). S14 is a CTP binding site. Residue S14 participates in UTP binding. Residues 15–20 and D72 each bind ATP; that span reads SLGKGI. D72 and E140 together coordinate Mg(2+). Residues 147–149, 187–192, and K223 contribute to the CTP site; these read DIE and KTKPTQ. UTP is bound by residues 187-192 and K223; that span reads KTKPTQ. Position 239–241 (239–241) interacts with ATP; sequence KDV. Residues 291 to 542 form the Glutamine amidotransferase type-1 domain; the sequence is TIGMVGKYIE…VKAANEHQKR (252 aa). L-glutamine is bound at residue G352. Catalysis depends on C379, which acts as the Nucleophile; for glutamine hydrolysis. Residues 380 to 383, E403, and R470 each bind L-glutamine; that span reads LGMQ. Catalysis depends on residues H515 and E517.

The protein belongs to the CTP synthase family. In terms of assembly, homotetramer.

The enzyme catalyses UTP + L-glutamine + ATP + H2O = CTP + L-glutamate + ADP + phosphate + 2 H(+). It carries out the reaction L-glutamine + H2O = L-glutamate + NH4(+). The catalysed reaction is UTP + NH4(+) + ATP = CTP + ADP + phosphate + 2 H(+). It participates in pyrimidine metabolism; CTP biosynthesis via de novo pathway; CTP from UDP: step 2/2. Allosterically activated by GTP, when glutamine is the substrate; GTP has no effect on the reaction when ammonia is the substrate. The allosteric effector GTP functions by stabilizing the protein conformation that binds the tetrahedral intermediate(s) formed during glutamine hydrolysis. Inhibited by the product CTP, via allosteric rather than competitive inhibition. Functionally, catalyzes the ATP-dependent amination of UTP to CTP with either L-glutamine or ammonia as the source of nitrogen. Regulates intracellular CTP levels through interactions with the four ribonucleotide triphosphates. The polypeptide is CTP synthase (Salmonella typhi).